The sequence spans 93 residues: Putative protein adenylyltransferase MJ0435 (93 aa).

The short motif at 26–40 (GSYARNEQKETSDID) is the GSX(10)DXD motif element. D38, D40, and D70 together coordinate Mg(2+).

It belongs to the MntA antitoxin family. As to quaternary structure, probably forms a complex with cognate toxin MJ0434. It depends on Mg(2+) as a cofactor.

The catalysed reaction is L-tyrosyl-[protein] + ATP = O-(5'-adenylyl)-L-tyrosyl-[protein] + diphosphate. It carries out the reaction O-(5'-adenylyl)-L-tyrosyl-[protein] + ATP = O-[5'-(adenylyl-(5'-&gt;3')-adenylyl)]-L-tyrosyl-[protein] + diphosphate. Probable antitoxin component of a putative type VII toxin-antitoxin (TA) system. Neutralizes cognate toxic MJ0434 by di-AMPylation. This Methanocaldococcus jannaschii (strain ATCC 43067 / DSM 2661 / JAL-1 / JCM 10045 / NBRC 100440) (Methanococcus jannaschii) protein is Putative protein adenylyltransferase MJ0435.